An 840-amino-acid polypeptide reads, in one-letter code: MFPALETHLKQTIPDPYEDFMYRHLQYYGYFKAQRGSLPNSATHQHVRKNNPQYLLHGSLGGKDDLIPDTLQKEKLLWPTSLSSAVHRQIEAINRDSHMLSLPHLRSRQLLYDELDEVNPRLREPQELFSILSTKRPLLAPRWPIECEVIKESIHHIEWAPPQPEYFYQPKGNEKVPEIVGEKKGTVVYQLDSVPTEGSYFTSSRVGGKQGIIKELAVTLQGPEDNTLLFESRFECGNLQKAVRVDTYEYELTLRTDLYTNRHTQWFYFRVQNTRKDATYRFTIVNLLKPKSLYTVGMKPLLYSQMDANTRNIGWRREGNEIKYCKNNMDDGQQPFYCLTWTIQFPYDQDTCFFAHFYPYTYTDLQCYLLSVANNPIQSQFCKLQTLCRSLAGNTVYLLTITNPSQTPQEAAAKKAVVLSARVHPGESNGSWVMKGFLDFILSNSPDAQLLRDIFVFKVLPMLNPDGVIVGNYRCSLAGRDLNRHYKTILKESFPCIWYTRNMIKRLLEEREVLLYCDFHGHSRKNNTFLYGCNNNNRKYWLHERVFPLMLSKNAPDRFSFHSCNFKVQKCKEGTGRVVMWRMGILNSYTMESTFGGSTLGSKRDTHFTIEDLKSLGYHVCDTLLDFCDPDQTKFTQCLAELKELLRQEIHKKFHELGQDVDLEESWSDISLSDIESSTSGSDSSLSDGLPVHLANIADELTQKKMFKKKKKKSLQTRKQRNEQYQKKNLMWKLKLTEDTSEFASTLQKHPAFFKNSESSSFLPMRNENPRLNETNLNRRDKDTSLDPSMTTLILPKNKGRMQTNLNRRDKDTSLDPSMTTLILPKNKGRMQVLHLIYCI.

The region spanning 358–628 (YPYTYTDLQC…HVCDTLLDFC (271 aa)) is the Peptidase M14 domain. Residues histidine 424, glutamate 427, and histidine 520 each coordinate Zn(2+). The active-site Proton donor/acceptor is the glutamate 592. The segment covering 706-719 (MFKKKKKKSLQTRK) has biased composition (basic residues). 2 disordered regions span residues 706 to 726 (MFKK…EQYQ) and 758 to 789 (ESSS…LDPS).

This sequence belongs to the peptidase M14 family. Interacts with RARRES1, KIF11 and MAPRE1. Zn(2+) serves as cofactor.

It localises to the cytoplasm. It is found in the cytosol. The protein resides in the cytoskeleton. Its subcellular location is the microtubule organizing center. The protein localises to the centrosome. It localises to the centriole. It is found in the cilium basal body. It carries out the reaction (L-glutamyl)(n+1)-gamma-L-glutamyl-L-glutamyl-[protein] + H2O = (L-glutamyl)(n)-gamma-L-glutamyl-L-glutamyl-[protein] + L-glutamate. Its activity is regulated as follows. Inhibited by RARRES1. Metallocarboxypeptidase that mediates deglutamylation of tubulin and non-tubulin target proteins. Catalyzes the removal of polyglutamate side chains present on the gamma-carboxyl group of glutamate residues within the C-terminal tail of tubulin protein. Specifically cleaves tubulin long-side-chains, while it is not able to remove the branching point glutamate. Also catalyzes the removal of polyglutamate residues from the carboxy-terminus of non-tubulin proteins such as MYLK. The sequence is that of Cytosolic carboxypeptidase 2 (AGBL2) from Macaca fascicularis (Crab-eating macaque).